The chain runs to 369 residues: Anhydro-N-acetylmuramic acid kinase (369 aa).

12–19 (GTSMDGVD) is a binding site for ATP.

It belongs to the anhydro-N-acetylmuramic acid kinase family.

It catalyses the reaction 1,6-anhydro-N-acetyl-beta-muramate + ATP + H2O = N-acetyl-D-muramate 6-phosphate + ADP + H(+). It participates in amino-sugar metabolism; 1,6-anhydro-N-acetylmuramate degradation. Its pathway is cell wall biogenesis; peptidoglycan recycling. In terms of biological role, catalyzes the specific phosphorylation of 1,6-anhydro-N-acetylmuramic acid (anhMurNAc) with the simultaneous cleavage of the 1,6-anhydro ring, generating MurNAc-6-P. Is required for the utilization of anhMurNAc either imported from the medium or derived from its own cell wall murein, and thus plays a role in cell wall recycling. In Shewanella oneidensis (strain ATCC 700550 / JCM 31522 / CIP 106686 / LMG 19005 / NCIMB 14063 / MR-1), this protein is Anhydro-N-acetylmuramic acid kinase.